A 519-amino-acid polypeptide reads, in one-letter code: ATP synthase subunit alpha (519 aa).

175-182 (GDRQTGKT) is an ATP binding site.

It belongs to the ATPase alpha/beta chains family. F-type ATPases have 2 components, CF(1) - the catalytic core - and CF(0) - the membrane proton channel. CF(1) has five subunits: alpha(3), beta(3), gamma(1), delta(1), epsilon(1). CF(0) has three main subunits: a(1), b(2) and c(9-12). The alpha and beta chains form an alternating ring which encloses part of the gamma chain. CF(1) is attached to CF(0) by a central stalk formed by the gamma and epsilon chains, while a peripheral stalk is formed by the delta and b chains.

The protein localises to the cell inner membrane. It catalyses the reaction ATP + H2O + 4 H(+)(in) = ADP + phosphate + 5 H(+)(out). Produces ATP from ADP in the presence of a proton gradient across the membrane. The alpha chain is a regulatory subunit. The sequence is that of ATP synthase subunit alpha from Acinetobacter baylyi (strain ATCC 33305 / BD413 / ADP1).